We begin with the raw amino-acid sequence, 352 residues long: MKKIVFTGGGTVGHVTLNLLLMPKFIEDGWEVHYIGDKRGIEHQEILKSGLDVTFHSIATGKLRRYFSWQNMLDVFKVGWGIVQSLFIMLRLRPQTLFSKGGFVSVPPVIAARVSGVPVFIHESDLSMGLANKIAYKFATKMYSTFEQASSLSKVEHVGAVTKVSDQKNPEPDELVDIQSHFNHKLPTVLFVGGSAGARVFNQLVTDHKKELTERYNIINLTGDSSLNELSQNLFRVDYVTDLYQPLMELADIVVTRGGANTIFELLAIAKLHVIVPLGREASRGDQIENAAYFVKKGYAEDLQESDLTLDSLEEKLSHLLSHKEDYQAKMKASKELKSLADFYQLLKKDLS.

Residues Ser-195 and Gln-287 each coordinate UDP-N-acetyl-alpha-D-glucosamine.

Belongs to the glycosyltransferase 28 family. MurG subfamily.

The protein resides in the cell membrane. The catalysed reaction is Mur2Ac(oyl-L-Ala-gamma-D-Glu-L-Lys-D-Ala-D-Ala)-di-trans,octa-cis-undecaprenyl diphosphate + UDP-N-acetyl-alpha-D-glucosamine = beta-D-GlcNAc-(1-&gt;4)-Mur2Ac(oyl-L-Ala-gamma-D-Glu-L-Lys-D-Ala-D-Ala)-di-trans,octa-cis-undecaprenyl diphosphate + UDP + H(+). The protein operates within cell wall biogenesis; peptidoglycan biosynthesis. Cell wall formation. Catalyzes the transfer of a GlcNAc subunit on undecaprenyl-pyrophosphoryl-MurNAc-pentapeptide (lipid intermediate I) to form undecaprenyl-pyrophosphoryl-MurNAc-(pentapeptide)GlcNAc (lipid intermediate II). In Streptococcus pneumoniae (strain Taiwan19F-14), this protein is UDP-N-acetylglucosamine--N-acetylmuramyl-(pentapeptide) pyrophosphoryl-undecaprenol N-acetylglucosamine transferase.